A 456-amino-acid polypeptide reads, in one-letter code: TGACG-sequence-specific DNA-binding protein TGA-2.1 (456 aa).

2 disordered regions span residues 1–41 (MASK…NTSR) and 115–170 (SASG…QKTL). Composition is skewed to polar residues over residues 9–41 (GNRS…NTSR) and 125–141 (GESN…TSTD). Basic and acidic residues predominate over residues 158 to 169 (DKSKEKVLDQKT). The 64-residue stretch at 166–229 (DQKTLRRLAQ…NIADQSNGVG (64 aa)) folds into the bZIP domain. The stretch at 167 to 220 (QKTLRRLAQNREAARKSRLRKKAYVQQLENSRLKLSQLEQDLQRARQQGKYISN) forms a coiled coil. Residues 168-188 (KTLRRLAQNREAARKSRLRKK) form a basic motif region. Positions 194 to 208 (LENSRLKLSQLEQDL) are leucine-zipper. A DOG1 domain is found at 233 to 450 (PLAFDAEYSR…RALSSLWLAR (218 aa)).

This sequence belongs to the bZIP family. Can form heterodimer with TGA2.2.

It localises to the nucleus. Transcriptional activator that binds specifically to the DNA sequence 5'-TGACG-3'. Recognizes ocs elements like the as-1 motif of the cauliflower mosaic virus 35S promoter. Binding to the as-1-like cis elements mediate auxin- and salicylic acid-inducible transcription. The sequence is that of TGACG-sequence-specific DNA-binding protein TGA-2.1 (TGA21) from Nicotiana tabacum (Common tobacco).